Reading from the N-terminus, the 338-residue chain is Anthranilate phosphoribosyltransferase (338 aa).

Residues G83, 86-87 (GD), S91, 93-96 (NCST), 111-119 (KHGNRAVSS), and A123 contribute to the 5-phospho-alpha-D-ribose 1-diphosphate site. G83 provides a ligand contact to anthranilate. S95 lines the Mg(2+) pocket. N114 contacts anthranilate. Residue R169 coordinates anthranilate. Positions 228 and 229 each coordinate Mg(2+).

The protein belongs to the anthranilate phosphoribosyltransferase family. As to quaternary structure, homodimer. It depends on Mg(2+) as a cofactor.

It catalyses the reaction N-(5-phospho-beta-D-ribosyl)anthranilate + diphosphate = 5-phospho-alpha-D-ribose 1-diphosphate + anthranilate. Its pathway is amino-acid biosynthesis; L-tryptophan biosynthesis; L-tryptophan from chorismate: step 2/5. Catalyzes the transfer of the phosphoribosyl group of 5-phosphorylribose-1-pyrophosphate (PRPP) to anthranilate to yield N-(5'-phosphoribosyl)-anthranilate (PRA). The polypeptide is Anthranilate phosphoribosyltransferase (Nitratidesulfovibrio vulgaris (strain DSM 19637 / Miyazaki F) (Desulfovibrio vulgaris)).